The sequence spans 159 residues: ATP synthase subunit b 2 (159 aa).

A helical transmembrane segment spans residues 1-21; that stretch reads MDATFWALIGLIIFLAILAYL.

This sequence belongs to the ATPase B chain family. In terms of assembly, F-type ATPases have 2 components, F(1) - the catalytic core - and F(0) - the membrane proton channel. F(1) has five subunits: alpha(3), beta(3), gamma(1), delta(1), epsilon(1). F(0) has three main subunits: a(1), b(2) and c(10-14). The alpha and beta chains form an alternating ring which encloses part of the gamma chain. F(1) is attached to F(0) by a central stalk formed by the gamma and epsilon chains, while a peripheral stalk is formed by the delta and b chains.

It is found in the cell inner membrane. Its function is as follows. F(1)F(0) ATP synthase produces ATP from ADP in the presence of a proton or sodium gradient. F-type ATPases consist of two structural domains, F(1) containing the extramembraneous catalytic core and F(0) containing the membrane proton channel, linked together by a central stalk and a peripheral stalk. During catalysis, ATP synthesis in the catalytic domain of F(1) is coupled via a rotary mechanism of the central stalk subunits to proton translocation. In terms of biological role, component of the F(0) channel, it forms part of the peripheral stalk, linking F(1) to F(0). The protein is ATP synthase subunit b 2 of Brucella anthropi (strain ATCC 49188 / DSM 6882 / CCUG 24695 / JCM 21032 / LMG 3331 / NBRC 15819 / NCTC 12168 / Alc 37) (Ochrobactrum anthropi).